The sequence spans 87 residues: DNA-directed RNA polymerase subunit Rpo5 (87 aa).

The protein belongs to the archaeal Rpo5/eukaryotic RPB5 RNA polymerase subunit family. In terms of assembly, part of the RNA polymerase complex.

Its subcellular location is the cytoplasm. It catalyses the reaction RNA(n) + a ribonucleoside 5'-triphosphate = RNA(n+1) + diphosphate. DNA-dependent RNA polymerase (RNAP) catalyzes the transcription of DNA into RNA using the four ribonucleoside triphosphates as substrates. This chain is DNA-directed RNA polymerase subunit Rpo5, found in Thermoplasma acidophilum (strain ATCC 25905 / DSM 1728 / JCM 9062 / NBRC 15155 / AMRC-C165).